A 2898-amino-acid chain; its full sequence is Pericentrin (2898 aa).

The disordered stretch occupies residues 1–117 (MEDEQEQRRR…QPPPPQTAHS (117 aa)). Over residues 34–44 (SKKKTAKRKGS) the composition is skewed to basic residues. Phosphoserine is present on serine 44. 2 coiled-coil regions span residues 127–343 (LNNM…IRLL) and 382–434 (AQQQ…DSLE). The tract at residues 429–460 (REDSLESTEISSSCVLPEETSGREGKEPPDPL) is disordered. Basic and acidic residues predominate over residues 448 to 457 (TSGREGKEPP). Coiled coils occupy residues 468 to 527 (KVQE…LREK), 611 to 696 (CALQ…LETH), 727 to 787 (VADV…SLRM), and 872 to 939 (SQDQ…LRRL). Serine 1022 is subject to Phosphoserine. Coiled coils occupy residues 1069-1383 (EREF…QENM), 1429-1482 (NEVV…SLMG), and 1529-1593 (QLLA…AKEA). Phosphoserine is present on serine 1437. Disordered stretches follow at residues 1745–1786 (VASR…DDVL), 1815–1880 (TQEK…PLTP), and 1958–1979 (TSPS…GPDI). Composition is skewed to polar residues over residues 1747–1766 (SRDT…SENG) and 1817–1834 (EKLT…SGHS). The interaction with CDK5RAP2 stretch occupies residues 1801–1822 (NQDLLVQVEMPDFPTQEKLTSQ). Phosphoserine occurs at positions 1828, 1859, 1860, and 1959. Positions 1963 to 1976 (ELARRSDGSRKSDG) are enriched in basic and acidic residues. Residue serine 1987 is modified to Phosphoserine. The segment covering 2046 to 2055 (SESQDPSSAL) has biased composition (polar residues). Positions 2046 to 2088 (SESQDPSSALNKGEPRDPLDGFPRDSQALSEVTTDKGEKESLE) are disordered. 2 stretches are compositionally biased toward basic and acidic residues: residues 2058–2068 (GEPRDPLDGFP) and 2078–2088 (TTDKGEKESLE). Serine 2128 carries the post-translational modification Phosphoserine. Coiled-coil stretches lie at residues 2211 to 2403 (KVEQ…EALQ) and 2429 to 2590 (HALL…ELSM). Disordered regions lie at residues 2509 to 2532 (VSGG…QFQE) and 2653 to 2684 (NRQS…QTTS). The segment at 2545–2810 (LCAAGLLTSF…SQRQRSPSGP (266 aa)) is interaction with NEK2. Residues 2653–2671 (NRQSKSSLKQDGTDLQSSL) are compositionally biased toward polar residues. Residues 2758-2771 (KFRTAVRVVIAVLR) form a calmodulin-binding region. Residues 2787 to 2898 (ALVHPKSTRH…QKSCHQKIKQ (112 aa)) are disordered. Residues 2792 to 2802 (KSTRHGHRTSQ) show a composition bias toward basic residues. The span at 2845–2860 (TSTPSSRLERSLTASQ) shows a compositional bias: polar residues. A compositionally biased stretch (basic and acidic residues) spans 2861–2874 (DPEHSLTEYIHHLE). Phosphoserine is present on serine 2865.

As to quaternary structure, interacts with DISC1 and PCM1. Binds calmodulin. Interacts with CEP131. Interacts with CDK5RAP2; the interaction is leading to centrosomal localization of PCNT and CDK5RAP2. Interacts with CHD3. Interacts with CHD4; the interaction regulates centrosome integrity. Interacts with NEK2. Interacts with CCDC13. Interacts with CEP68. Interacts with ATF5; the ATF5:PCNT:polyglutamylated tubulin (PGT) tripartite unites the mother centriole and the pericentriolar material (PCM) in the centrosome. Cleaved during mitotis which leads to removal of CDK5RAP2 from the centrosome and promotes centriole disengagement and subsequent centriole separation. The C-terminal fragment is rapidly degraded following cleavage. Post-translationally, ubiquitinated by TRIM43; leading to proteasomal degradation. As to expression, expressed in heart and lung (at protein level). Expressed in kidney, thymus, liver, brain, muscle, testis, spleen, lung and heart.

The protein localises to the cytoplasm. The protein resides in the cytoskeleton. It is found in the microtubule organizing center. It localises to the centrosome. Integral component of the filamentous matrix of the centrosome involved in the initial establishment of organized microtubule arrays in both mitosis and meiosis. Plays a role, together with DISC1, in the microtubule network formation. Is an integral component of the pericentriolar material (PCM). May play an important role in preventing premature centrosome splitting during interphase by inhibiting NEK2 kinase activity at the centrosome. The polypeptide is Pericentrin (Pcnt) (Mus musculus (Mouse)).